The primary structure comprises 285 residues: Small ribosomal subunit protein uS2 (285 aa).

Positions 231–285 are disordered; the sequence is GGKSGQAAAEPMAEWERELLEQHNAQQAEQAEAPAAEAPAEPAEAPAAEAAPQGE. Residues 255 to 285 show a composition bias toward low complexity; that stretch reads AQQAEQAEAPAAEAPAEPAEAPAAEAAPQGE.

The protein belongs to the universal ribosomal protein uS2 family.

This chain is Small ribosomal subunit protein uS2, found in Micrococcus luteus (strain ATCC 4698 / DSM 20030 / JCM 1464 / CCM 169 / CCUG 5858 / IAM 1056 / NBRC 3333 / NCIMB 9278 / NCTC 2665 / VKM Ac-2230) (Micrococcus lysodeikticus).